The chain runs to 521 residues: CD166 antigen (521 aa).

The Extracellular portion of the chain corresponds to 1–465; that stretch reads GSPVFIAFRS…NREKVNDQAK (465 aa). N29, N33, N105, N203, N244, N299, N395, N418, and N437 each carry an N-linked (GlcNAc...) asparagine glycan. Positions 63–172 constitute an Ig-like V-type 2 domain; that stretch reads PTVVKVFKQP…YGPSGQKTVH (110 aa). C95 and C158 are joined by a disulfide. Ig-like C2-type domains are found at residues 183-266, 271-347, and 354-439; these read PTEQ…TAIT, DLSL…ESLT, and PQIK…LNVS. Intrachain disulfides connect C208–C251, C292–C330, and C373–C423. The helical transmembrane segment at 466 to 487 threads the bilayer; it reads LIVGIVVGLLLAALVAGVVYWL. At 488 to 521 the chain is on the cytoplasmic side; the sequence is YMKKSKTASKHVNKDLGNMEENKKLEENNHKTEA. A disordered region spans residues 500–521; the sequence is NKDLGNMEENKKLEENNHKTEA. The segment covering 507-521 has biased composition (basic and acidic residues); it reads EENKKLEENNHKTEA.

In terms of assembly, homodimer. Interacts (via extracellular domain) with CD6 (via extracellular domain). Homodimerization and interaction with CD6 involve the same region and cannot occur simultaneously. The affinity for CD6 is much higher than the affinity for self-association. Interacts (via glycosylated extracellular domain) with LGALS1 and LGALS3. Interaction with LGALS1 or LGALS3 inhibits interaction with CD6. Post-translationally, glycosylated.

It localises to the cell membrane. The protein localises to the cell projection. Its subcellular location is the axon. It is found in the dendrite. Functionally, cell adhesion molecule that mediates both heterotypic cell-cell contacts via its interaction with CD6, as well as homotypic cell-cell contacts. Promotes T-cell activation and proliferation via its interactions with CD6. Contributes to the formation and maturation of the immunological synapse via its interactions with CD6. Mediates homotypic interactions with cells that express ALCAM. Mediates attachment of dendritic cells onto endothelial cells via homotypic interaction. Inhibits endothelial cell migration and promotes endothelial tube formation via homotypic interactions. Required for normal organization of the lymph vessel network. Required for normal hematopoietic stem cell engraftment in the bone marrow. Plays a role in hematopoiesis; required for normal numbers of hematopoietic stem cells in bone marrow. Promotes in vitro osteoblast proliferation and differentiation. Promotes neurite extension, axon growth and axon guidance; axons grow preferentially on surfaces that contain ALCAM. Mediates outgrowth and pathfinding for retinal ganglion cell axons. This is CD166 antigen (ALCAM) from Oryctolagus cuniculus (Rabbit).